Reading from the N-terminus, the 757-residue chain is 5-methyltetrahydropteroyltriglutamate--homocysteine methyltransferase (757 aa).

5-methyltetrahydropteroyltri-L-glutamate contacts are provided by residues 17–20 (RELK) and Lys-117. L-homocysteine is bound by residues 432–434 (IGS) and Glu-485. Residues 432–434 (IGS) and Glu-485 contribute to the L-methionine site. Residues 516-517 (RC) and Trp-562 contribute to the 5-methyltetrahydropteroyltri-L-glutamate site. Asp-600 is a binding site for L-homocysteine. Asp-600 contacts L-methionine. Glu-606 contributes to the 5-methyltetrahydropteroyltri-L-glutamate binding site. Zn(2+)-binding residues include His-642, Cys-644, and Glu-666. His-695 serves as the catalytic Proton donor. Position 727 (Cys-727) interacts with Zn(2+).

The protein belongs to the vitamin-B12 independent methionine synthase family. The cofactor is Zn(2+).

It carries out the reaction 5-methyltetrahydropteroyltri-L-glutamate + L-homocysteine = tetrahydropteroyltri-L-glutamate + L-methionine. The protein operates within amino-acid biosynthesis; L-methionine biosynthesis via de novo pathway; L-methionine from L-homocysteine (MetE route): step 1/1. In terms of biological role, catalyzes the transfer of a methyl group from 5-methyltetrahydrofolate to homocysteine resulting in methionine formation. In Erwinia tasmaniensis (strain DSM 17950 / CFBP 7177 / CIP 109463 / NCPPB 4357 / Et1/99), this protein is 5-methyltetrahydropteroyltriglutamate--homocysteine methyltransferase.